A 153-amino-acid polypeptide reads, in one-letter code: MGSLVQGDDFQHILRLLNTNVDGKNKIMYAMTAIRGIGRRFSNLVCKKAEVDLRKAAGECSADELERMMGIVANPRAYKIPDWFLNRQKDHKTGRFSQLTSSQLDTVMRDDLERLKKIRGHRGLRHYWGLRVRGQHTKTTGRAGKTVGVAKKK.

This sequence belongs to the universal ribosomal protein uS13 family.

The protein localises to the cytoplasm. Functionally, located at the top of the head of the 40S subunit, it contacts several helices of the 18S rRNA. The polypeptide is Small ribosomal subunit protein uS13 (RPS18) (Chlamydomonas reinhardtii (Chlamydomonas smithii)).